Reading from the N-terminus, the 54-residue chain is Hydrophobic protein RCI2A (54 aa).

2 consecutive transmembrane segments (helical) span residues 2-22 (STAT…GVFL) and 32-52 (ICLV…IYVL).

The protein belongs to the UPF0057 (PMP3) family.

The protein resides in the membrane. The polypeptide is Hydrophobic protein RCI2A (RCI2A) (Arabidopsis thaliana (Mouse-ear cress)).